The chain runs to 247 residues: tRNA pseudouridine synthase A (247 aa).

Catalysis depends on Asp53, which acts as the Nucleophile. Tyr111 contributes to the substrate binding site.

It belongs to the tRNA pseudouridine synthase TruA family. Homodimer.

It catalyses the reaction uridine(38/39/40) in tRNA = pseudouridine(38/39/40) in tRNA. Functionally, formation of pseudouridine at positions 38, 39 and 40 in the anticodon stem and loop of transfer RNAs. The protein is tRNA pseudouridine synthase A of Bacillus licheniformis (strain ATCC 14580 / DSM 13 / JCM 2505 / CCUG 7422 / NBRC 12200 / NCIMB 9375 / NCTC 10341 / NRRL NRS-1264 / Gibson 46).